Here is a 347-residue protein sequence, read N- to C-terminus: GMP reductase (347 aa).

Residue 108 to 131 (ADFAKTAQILALNPALNFVCIDVA) coordinates NADP(+). The K(+) site is built by G181 and G183. C186 serves as the catalytic Thioimidate intermediate. 216 to 239 (IVSDGGCTMPGDVAKAFGGGADFV) serves as a coordination point for NADP(+).

Belongs to the IMPDH/GMPR family. GuaC type 1 subfamily. As to quaternary structure, homotetramer.

The catalysed reaction is IMP + NH4(+) + NADP(+) = GMP + NADPH + 2 H(+). Its function is as follows. Catalyzes the irreversible NADPH-dependent deamination of GMP to IMP. It functions in the conversion of nucleobase, nucleoside and nucleotide derivatives of G to A nucleotides, and in maintaining the intracellular balance of A and G nucleotides. This chain is GMP reductase, found in Salmonella arizonae (strain ATCC BAA-731 / CDC346-86 / RSK2980).